A 567-amino-acid chain; its full sequence is MQSVLSLSFSQASLPLANRTLCSSNAAPSTPRNLRFCGLRREAFCFSPSKQLTSCRFHIQSRRIEVSAAASSSAGNGAPSKSFDYDLIIIGAGVGGHGAALHAVEKGLKTAIIEGDVVGGTCVNRGCVPSKALLAVSGRMRELQNEHHMKAFGLQVSAAGYDRQGVADHASNLATKIRNNLTNSMKALGVDILTGFGAVLGPQKVKYGDNIITGKDIIIATGSVPFVPKGIEVDGKTVITSDHALKLESVPDWIAIVGSGYIGLEFSDVYTALGSEVTFIEALDQLMPGFDPEISKLAQRVLINTRKIDYHTGVFASKITPAKDGKPVLIELIDAKTKEPKDTLEVDAALIATGRAPFTNGLGLENINVTTQRGFIPVDERMRVIDGNGKLVPHLYCIGDANGKLMLAHAASAQGISVVEQVTGRDHVLNHLSIPAACFTHPEISMVGLTEPQAREKAEKEGFKVSIAKTSFKANTKALAENEGEGLAKMIYRPDNGEILGVHIFGLHAADLIHEASNAIALGTRIQDIKLAVHAHPTLSEVVDELFKAAKVDSPASVTAQSVKVTV.

The N-terminal 67 residues, 1 to 67 (MQSVLSLSFS…HIQSRRIEVS (67 aa)), are a transit peptide targeting the chloroplast. Residues 114–122 (EGDVVGGTC), Lys-131, Gly-197, and 221–223 (TGS) contribute to the FAD site. The cysteines at positions 122 and 127 are disulfide-linked. Residues 258–265 (GSGYIGLE), Glu-281, and Gly-354 each bind NAD(+). FAD-binding positions include Asp-400 and 406–409 (MLAH). The active-site Proton acceptor is His-536.

It belongs to the class-I pyridine nucleotide-disulfide oxidoreductase family. Homodimer. Part of the plastidial pyruvate dehydrogenase complex (PDC) containing multiple copies of three enzymatic components: pyruvate dehydrogenase (E1), dihydrolipoamide acetyltransferase (E2) and lipoamide dehydrogenase (E3). Requires FAD as cofactor. Expressed mainly in flower buds and immature siliques, and to a lesser extent in flowers.

The protein localises to the plastid. The protein resides in the chloroplast stroma. It catalyses the reaction N(6)-[(R)-dihydrolipoyl]-L-lysyl-[protein] + NAD(+) = N(6)-[(R)-lipoyl]-L-lysyl-[protein] + NADH + H(+). Lipoamide dehydrogenase is a component of the plastidial pyruvate dehydrogenase complex (PDC). The protein is Dihydrolipoyl dehydrogenase 2, chloroplastic (LPD2) of Arabidopsis thaliana (Mouse-ear cress).